Reading from the N-terminus, the 135-residue chain is Holo-[acyl-carrier-protein] synthase (135 aa).

Mg(2+)-binding residues include Asp7 and Glu57.

This sequence belongs to the P-Pant transferase superfamily. AcpS family. Requires Mg(2+) as cofactor.

It localises to the cytoplasm. It catalyses the reaction apo-[ACP] + CoA = holo-[ACP] + adenosine 3',5'-bisphosphate + H(+). Transfers the 4'-phosphopantetheine moiety from coenzyme A to a Ser of acyl-carrier-protein. This is Holo-[acyl-carrier-protein] synthase from Corynebacterium glutamicum (strain ATCC 13032 / DSM 20300 / JCM 1318 / BCRC 11384 / CCUG 27702 / LMG 3730 / NBRC 12168 / NCIMB 10025 / NRRL B-2784 / 534).